The primary structure comprises 252 residues: Thiazole synthase (252 aa).

Lys98 functions as the Schiff-base intermediate with DXP in the catalytic mechanism. 1-deoxy-D-xylulose 5-phosphate is bound by residues Gly159, 185 to 186 (AG), and 207 to 208 (AT).

Belongs to the ThiG family. In terms of assembly, homotetramer. Forms heterodimers with either ThiH or ThiS.

It localises to the cytoplasm. The enzyme catalyses [ThiS sulfur-carrier protein]-C-terminal-Gly-aminoethanethioate + 2-iminoacetate + 1-deoxy-D-xylulose 5-phosphate = [ThiS sulfur-carrier protein]-C-terminal Gly-Gly + 2-[(2R,5Z)-2-carboxy-4-methylthiazol-5(2H)-ylidene]ethyl phosphate + 2 H2O + H(+). It participates in cofactor biosynthesis; thiamine diphosphate biosynthesis. Its function is as follows. Catalyzes the rearrangement of 1-deoxy-D-xylulose 5-phosphate (DXP) to produce the thiazole phosphate moiety of thiamine. Sulfur is provided by the thiocarboxylate moiety of the carrier protein ThiS. In vitro, sulfur can be provided by H(2)S. This chain is Thiazole synthase, found in Mycobacterium avium (strain 104).